The following is a 283-amino-acid chain: Pantothenate synthetase (283 aa).

Position 30-37 (30-37) interacts with ATP; sequence MGYLHEGH. Residue H37 is the Proton donor of the active site. Q61 serves as a coordination point for (R)-pantoate. Q61 contributes to the beta-alanine binding site. 147–150 contacts ATP; it reads GQKD. Residue Q153 participates in (R)-pantoate binding. Residues V176 and 184–187 each bind ATP; that span reads MSSR.

Belongs to the pantothenate synthetase family. As to quaternary structure, homodimer.

The protein localises to the cytoplasm. The catalysed reaction is (R)-pantoate + beta-alanine + ATP = (R)-pantothenate + AMP + diphosphate + H(+). Its pathway is cofactor biosynthesis; (R)-pantothenate biosynthesis; (R)-pantothenate from (R)-pantoate and beta-alanine: step 1/1. Its function is as follows. Catalyzes the condensation of pantoate with beta-alanine in an ATP-dependent reaction via a pantoyl-adenylate intermediate. In Thermoanaerobacter pseudethanolicus (strain ATCC 33223 / 39E) (Clostridium thermohydrosulfuricum), this protein is Pantothenate synthetase.